Here is a 259-residue protein sequence, read N- to C-terminus: GTP cyclohydrolase FolE2 (259 aa).

This sequence belongs to the GTP cyclohydrolase IV family.

It carries out the reaction GTP + H2O = 7,8-dihydroneopterin 3'-triphosphate + formate + H(+). The protein operates within cofactor biosynthesis; 7,8-dihydroneopterin triphosphate biosynthesis; 7,8-dihydroneopterin triphosphate from GTP: step 1/1. Converts GTP to 7,8-dihydroneopterin triphosphate. This is GTP cyclohydrolase FolE2 from Halorhodospira halophila (strain DSM 244 / SL1) (Ectothiorhodospira halophila (strain DSM 244 / SL1)).